We begin with the raw amino-acid sequence, 495 residues long: 3-octaprenyl-4-hydroxybenzoate carboxy-lyase (495 aa).

Residue N172 participates in Mn(2+) binding. Prenylated FMN-binding positions include 175–177 (IYR), 189–191 (RWL), and 194–195 (RG). A Mn(2+)-binding site is contributed by E238. D287 functions as the Proton donor in the catalytic mechanism.

It belongs to the UbiD family. Homohexamer. It depends on prenylated FMN as a cofactor. Mn(2+) is required as a cofactor.

The protein localises to the cell membrane. It catalyses the reaction a 4-hydroxy-3-(all-trans-polyprenyl)benzoate + H(+) = a 2-(all-trans-polyprenyl)phenol + CO2. It participates in cofactor biosynthesis; ubiquinone biosynthesis. In terms of biological role, catalyzes the decarboxylation of 3-octaprenyl-4-hydroxy benzoate to 2-octaprenylphenol, an intermediate step in ubiquinone biosynthesis. The sequence is that of 3-octaprenyl-4-hydroxybenzoate carboxy-lyase from Marinobacter nauticus (strain ATCC 700491 / DSM 11845 / VT8) (Marinobacter aquaeolei).